The following is a 431-amino-acid chain: Adenylosuccinate synthetase (431 aa).

GTP contacts are provided by residues 12–18 (GDEGKGK) and 40–42 (GHT). D13 functions as the Proton acceptor in the catalytic mechanism. D13 and G40 together coordinate Mg(2+). IMP contacts are provided by residues 13 to 16 (DEGK), 38 to 41 (NAGH), T131, R145, Q225, T240, and R304. H41 serves as the catalytic Proton donor. 300–306 (TTTGRKR) contacts substrate. GTP is bound by residues R306, 332-334 (KLD), and 414-416 (STS).

This sequence belongs to the adenylosuccinate synthetase family. As to quaternary structure, homodimer. It depends on Mg(2+) as a cofactor.

It is found in the cytoplasm. The catalysed reaction is IMP + L-aspartate + GTP = N(6)-(1,2-dicarboxyethyl)-AMP + GDP + phosphate + 2 H(+). Its pathway is purine metabolism; AMP biosynthesis via de novo pathway; AMP from IMP: step 1/2. In terms of biological role, plays an important role in the de novo pathway of purine nucleotide biosynthesis. Catalyzes the first committed step in the biosynthesis of AMP from IMP. The polypeptide is Adenylosuccinate synthetase (Jannaschia sp. (strain CCS1)).